A 212-amino-acid chain; its full sequence is Large ribosomal subunit protein uL3 (212 aa).

Residues 133-156 (SMTHGSKNHRLPGSTGAGTTPGRV) are disordered.

This sequence belongs to the universal ribosomal protein uL3 family. As to quaternary structure, part of the 50S ribosomal subunit. Forms a cluster with proteins L14 and L19.

In terms of biological role, one of the primary rRNA binding proteins, it binds directly near the 3'-end of the 23S rRNA, where it nucleates assembly of the 50S subunit. This chain is Large ribosomal subunit protein uL3, found in Crocosphaera subtropica (strain ATCC 51142 / BH68) (Cyanothece sp. (strain ATCC 51142)).